A 631-amino-acid chain; its full sequence is Poly(A)-specific ribonuclease PARN (631 aa).

The a divalent metal cation site is built by Asp28 and Glu30. The disordered stretch occupies residues 147-173 (EDRRSQSNGASTMSYISPNSSKTPVSI). The segment covering 152-170 (QSNGASTMSYISPNSSKTP) has biased composition (polar residues). Residues 178 to 244 (KGFIDKVVER…ERYIVISKVD (67 aa)) form the R3H domain. Positions 291 and 381 each coordinate a divalent metal cation. A disordered region spans residues 568–631 (SPIQEEAASD…SVLFEVPDTW (64 aa)).

Belongs to the CAF1 family. Component of a complex at least composed of cpeb1, cpsf1, papd4/gld2, pabpc1/ePAB, parn and sympk. The cofactor is a divalent metal cation. A 62 kDa form, which is produced by proteolytic cleavage, also exists. As to expression, in retina, it is constitutively present in most retinal cells, including the photoreceptors.

The protein resides in the cytoplasm. It is found in the nucleus. It catalyses the reaction Exonucleolytic cleavage of poly(A) to 5'-AMP.. 3'-exoribonuclease that has a preference for poly(A) tails of mRNAs, thereby efficiently degrading poly(A) tails. Exonucleolytic degradation of the poly(A) tail is often the first step in the decay of eukaryotic mRNAs. Required during meiotic maturation to silence certain maternal mRNAs translationally. Does not require an adenosine residue at the 3' end, however, the addition of 25 non-adenylate residues at the 3' terminus, or a 3' terminal phosphate is inhibitory. Involved in dormant mRNAs regulation during oocyte maturation by counteracting polyadenylation mediated by papd4/gld2nt in immature eggs. During maturation it is excluded from the ribonucleoprotein complex, allowing poly(A) elongation by papd4/gld2nt and activation of mRNAs. This chain is Poly(A)-specific ribonuclease PARN (parn), found in Xenopus laevis (African clawed frog).